A 243-amino-acid polypeptide reads, in one-letter code: Ribosomal RNA small subunit methyltransferase J (243 aa).

S-adenosyl-L-methionine contacts are provided by residues 112-113 (ER) and Asp164.

It belongs to the methyltransferase superfamily. RsmJ family.

It is found in the cytoplasm. It carries out the reaction guanosine(1516) in 16S rRNA + S-adenosyl-L-methionine = N(2)-methylguanosine(1516) in 16S rRNA + S-adenosyl-L-homocysteine + H(+). In terms of biological role, specifically methylates the guanosine in position 1516 of 16S rRNA. The polypeptide is Ribosomal RNA small subunit methyltransferase J (Legionella pneumophila subsp. pneumophila (strain Philadelphia 1 / ATCC 33152 / DSM 7513)).